The chain runs to 304 residues: Carnitine monooxygenase reductase subunit (304 aa).

One can recognise an FAD-binding FR-type domain in the interval 1–93 (MEQLTPLIKR…SEPKNLFPLA (93 aa)). Residues 219 to 304 (FTVVLAKSNQ…AKGKKLVLDL (86 aa)) form the 2Fe-2S ferredoxin-type domain. Positions 253, 258, 261, and 291 each coordinate [2Fe-2S] cluster.

It belongs to the PDR/VanB family. CntB subfamily. As to quaternary structure, composed of an oxygenase subunit and a reductase subunit. Requires FMN as cofactor. [2Fe-2S] cluster is required as a cofactor.

The enzyme catalyses (R)-carnitine + NADH + O2 + H(+) = (3R)-3-hydroxy-4-oxobutanoate + trimethylamine + NAD(+) + H2O. It catalyses the reaction (R)-carnitine + NADPH + O2 + H(+) = (3R)-3-hydroxy-4-oxobutanoate + trimethylamine + NADP(+) + H2O. Its pathway is amine and polyamine metabolism; carnitine metabolism. With respect to regulation, inhibited by EDTA. Its function is as follows. Converts carnitine to trimethylamine and malic semialdehyde. Acts on both enantiomers. The protein is Carnitine monooxygenase reductase subunit of Acinetobacter pittii (strain PHEA-2).